Consider the following 454-residue polypeptide: MRSCTVSTMPRMICRNADLEFDWLQPCFYPDEDDFYFSGPNSTPPGEDIWKKFELLPTPPLSPSCAFLELSTEPSDWASEMMLTEADLWGNPDEEDVFGPGGLGSLTPNPVILRDCMWSGFSAREKLERAMSEKMQHGHEPAATGPATQVPGAGAASTAGRGHSGTAGAALPAELAHPAAECVDPAVVFLLPVSKRNPVPVRVAPARAPARAPAVGAAVARAAAPASAAVAAPPGLSSRPPNGGDHKVLSTSGEDALSDEVDEEEDEEEEIDVVTVEKSCKTGGTTFTLTVSPKNTALGLRREQSRELILQRSVPIYQQHNYAAPSPYVENEDAPPQKKIKREVSPHPLKSVIHPKGKSFSPRKSDSEDSVRRRNHNILERQRRNDLRSSFTTLRDHVPELVKNEKAAKVVILKKACEYVHYLQAKEHQLLMEKEKLQARQQQLLKIIELAWTF.

3 disordered regions span residues 133 to 166, 231 to 270, and 326 to 374; these read EKMQHGHEPAATGPATQVPGAGAASTAGRGHSGT, AAPPGLSSRPPNGGDHKVLSTSGEDALSDEVDEEEDEEEE, and SPYV…VRRR. Residues 256-270 are compositionally biased toward acidic residues; sequence ALSDEVDEEEDEEEE. Basic and acidic residues predominate over residues 363–374; sequence RKSDSEDSVRRR. The bHLH domain occupies 371–423; it reads VRRRNHNILERQRRNDLRSSFTTLRDHVPELVKNEKAAKVVILKKACEYVHYL. The segment at 423–444 is leucine-zipper; sequence LQAKEHQLLMEKEKLQARQQQL.

In terms of assembly, efficient DNA binding requires dimerization with another bHLH protein.

It localises to the nucleus. The protein is N-myc 2 proto-oncogene protein (N-MYC2) of Otospermophilus beecheyi (California ground squirrel).